The sequence spans 250 residues: Cell division protein ZapD (250 aa).

It belongs to the ZapD family. In terms of assembly, interacts with FtsZ.

The protein resides in the cytoplasm. Its function is as follows. Cell division factor that enhances FtsZ-ring assembly. Directly interacts with FtsZ and promotes bundling of FtsZ protofilaments, with a reduction in FtsZ GTPase activity. The chain is Cell division protein ZapD from Bordetella petrii (strain ATCC BAA-461 / DSM 12804 / CCUG 43448).